A 146-amino-acid chain; its full sequence is Protein U1 (146 aa).

The protein belongs to the nanovirus U1 protein family.

The sequence is that of Protein U1 (DNA-U1) from Subterranean clover stunt virus (strain F) (SCSV).